The sequence spans 316 residues: Coproporphyrin III ferrochelatase (316 aa).

Fe-coproporphyrin III is bound by residues tyrosine 13, arginine 30, 46-47 (RY), serine 54, and tyrosine 125. Fe(2+)-binding residues include histidine 183 and glutamate 264.

The protein belongs to the ferrochelatase family.

It is found in the cytoplasm. It catalyses the reaction Fe-coproporphyrin III + 2 H(+) = coproporphyrin III + Fe(2+). It participates in porphyrin-containing compound metabolism; protoheme biosynthesis. Involved in coproporphyrin-dependent heme b biosynthesis. Catalyzes the insertion of ferrous iron into coproporphyrin III to form Fe-coproporphyrin III. The protein is Coproporphyrin III ferrochelatase of Geobacillus thermodenitrificans (strain NG80-2).